Consider the following 307-residue polypeptide: N-acetylmuramic acid 6-phosphate etherase (307 aa).

Residues 62–225 (IVLAFQKGAR…TTASMIRIGK (164 aa)) enclose the SIS domain. Glu-90 functions as the Proton donor in the catalytic mechanism. The active site involves Glu-121.

Belongs to the GCKR-like family. MurNAc-6-P etherase subfamily. Homodimer.

It catalyses the reaction N-acetyl-D-muramate 6-phosphate + H2O = N-acetyl-D-glucosamine 6-phosphate + (R)-lactate. It functions in the pathway amino-sugar metabolism; 1,6-anhydro-N-acetylmuramate degradation. It participates in amino-sugar metabolism; N-acetylmuramate degradation. Its pathway is cell wall biogenesis; peptidoglycan recycling. Specifically catalyzes the cleavage of the D-lactyl ether substituent of MurNAc 6-phosphate, producing GlcNAc 6-phosphate and D-lactate. Together with AnmK, is also required for the utilization of anhydro-N-acetylmuramic acid (anhMurNAc) either imported from the medium or derived from its own cell wall murein, and thus plays a role in cell wall recycling. The protein is N-acetylmuramic acid 6-phosphate etherase of Mesorhizobium japonicum (strain LMG 29417 / CECT 9101 / MAFF 303099) (Mesorhizobium loti (strain MAFF 303099)).